The following is a 314-amino-acid chain: Lipoyl synthase (314 aa).

The [4Fe-4S] cluster site is built by Cys61, Cys66, Cys72, Cys87, Cys91, Cys94, and Ser301. The Radical SAM core domain occupies 73–290 (FGRGTATFMI…EEEAKKMGFS (218 aa)).

This sequence belongs to the radical SAM superfamily. Lipoyl synthase family. [4Fe-4S] cluster serves as cofactor.

Its subcellular location is the cytoplasm. It catalyses the reaction [[Fe-S] cluster scaffold protein carrying a second [4Fe-4S](2+) cluster] + N(6)-octanoyl-L-lysyl-[protein] + 2 oxidized [2Fe-2S]-[ferredoxin] + 2 S-adenosyl-L-methionine + 4 H(+) = [[Fe-S] cluster scaffold protein] + N(6)-[(R)-dihydrolipoyl]-L-lysyl-[protein] + 4 Fe(3+) + 2 hydrogen sulfide + 2 5'-deoxyadenosine + 2 L-methionine + 2 reduced [2Fe-2S]-[ferredoxin]. It functions in the pathway protein modification; protein lipoylation via endogenous pathway; protein N(6)-(lipoyl)lysine from octanoyl-[acyl-carrier-protein]: step 2/2. Functionally, catalyzes the radical-mediated insertion of two sulfur atoms into the C-6 and C-8 positions of the octanoyl moiety bound to the lipoyl domains of lipoate-dependent enzymes, thereby converting the octanoylated domains into lipoylated derivatives. The protein is Lipoyl synthase of Dechloromonas aromatica (strain RCB).